The following is a 102-amino-acid chain: Small ribosomal subunit protein uS10 (102 aa).

The protein belongs to the universal ribosomal protein uS10 family. Part of the 30S ribosomal subunit.

In terms of biological role, involved in the binding of tRNA to the ribosomes. In Rhodopseudomonas palustris (strain HaA2), this protein is Small ribosomal subunit protein uS10.